Here is an 881-residue protein sequence, read N- to C-terminus: MAVDSTDQRRDFVVRIDGEDNGDSEKFWRESSINFWHNDKSSKPPGGEEDDGSFDFMRRSSEKSEEPDPPSKLINQFLNKQKASGDEISLDMEANMPELQKNTVPPLSSTAVSGSASPVTAPVTASYRNGTGDAIRRRQNRVTLSPSVKDGDSSEDEENRVDGSEVVKCTSNRSTMRTKTLMKMKTRSRLMDPPTPTYPDMVSGRTPRSGNLNPGFSGRNTKPGTPNQGGSKDLEEEEDPFSEEDLPEGLRKEKICVWVIIEWIFLILIIASLICSLVIPYLRGKTLWDLALWKWEVMVLVLICGRLVSSWIVKLFVYFVESNFLWRKKVLYFVYGIRKPVQNCLWLGLVLIAWHFLFDKKVEREMRSTVLKYVTKVLICLLVAVIIWLIKTLLVKVLASSFHMSTYFDRIQESLFTQYVIETLSGPPRIEIHIEEEKVANDVKTFEIVGRKLSPLGPKAVSSPPQVTVGSGRLQKSPSRVGKSPVLSRSGSKKEGGEEGIRIDHLQRMNTKNVSAWKMKKLMNVIKKGTLSTLDEQIQDTTTQEDDKATQIRSEFEAKLAARKIFQNVAEPGSRYIYMEDFMRFLSEDESERAMDLFEGASECHKISKSCLKNWVVNAFRERRALALTLNDTKTAVNRLHRIVDVLVSIVILIIWLLILGIATTKFLLVISSQLLLVVFVFGNSCKTIFEAVIFVFVMHPFDVGDRCEIDGVQMIVEEMNILTTVFLRFDNQKIVYPNSLLGTKPIANYYRSPDMQDAIEFFVHIATPPEKTTALRQRILSYVDNKKDHWHPSPMIVFRDMCGLNSVKIAMWPTHKMNHQNMGERYVRRGQLLEEIGRLCRELDIEYRLYPLNINVKSLPAATPITSDRIPPSWNQQRSV.

The tract at residues 35-245 (FWHNDKSSKP…EEEDPFSEED (211 aa)) is disordered. Residues 56-66 (FMRRSSEKSEE) are compositionally biased toward basic and acidic residues. Polar residues-rich tracts occupy residues 73 to 82 (LINQFLNKQK), 100 to 118 (QKNTVPPLSSTAVSGSASP), and 206 to 230 (TPRSGNLNPGFSGRNTKPGTPNQGG). Residues 234-245 (LEEEEDPFSEED) are compositionally biased toward acidic residues. 4 consecutive transmembrane segments (helical) span residues 255–275 (ICVWVIIEWIFLILIIASLIC), 297–317 (VMVLVLICGRLVSSWIVKLFV), 339–359 (KPVQNCLWLGLVLIAWHFLFD), and 377–397 (VLICLLVAVIIWLIKTLLVKV). The segment at 457 to 501 (GPKAVSSPPQVTVGSGRLQKSPSRVGKSPVLSRSGSKKEGGEEGI) is disordered. Residues 463-478 (SPPQVTVGSGRLQKSP) are compositionally biased toward polar residues. Basic and acidic residues predominate over residues 492–501 (SKKEGGEEGI). The next 2 membrane-spanning stretches (helical) occupy residues 643 to 663 (IVDVLVSIVILIIWLLILGIA) and 678 to 698 (VVFVFGNSCKTIFEAVIFVFV).

It belongs to the MscS (TC 1.A.23) family.

It localises to the membrane. Mechanosensitive channel that opens in response to stretch forces in the membrane lipid bilayer. The chain is Mechanosensitive ion channel protein 4 (MSL4) from Arabidopsis thaliana (Mouse-ear cress).